Reading from the N-terminus, the 75-residue chain is Large ribosomal subunit protein bL31 (75 aa).

The protein belongs to the bacterial ribosomal protein bL31 family. Type A subfamily. Part of the 50S ribosomal subunit.

Binds the 23S rRNA. The sequence is that of Large ribosomal subunit protein bL31 from Acidiphilium cryptum (strain JF-5).